We begin with the raw amino-acid sequence, 227 residues long: Phosphatidylserine decarboxylase proenzyme (227 aa).

Catalysis depends on serine 181, which acts as the Schiff-base intermediate with substrate; via pyruvic acid. Serine 181 bears the Pyruvic acid (Ser); by autocatalysis mark.

It belongs to the phosphatidylserine decarboxylase family. PSD-A subfamily. In terms of assembly, heterodimer of a large membrane-associated beta subunit and a small pyruvoyl-containing alpha subunit. Requires pyruvate as cofactor. Is synthesized initially as an inactive proenzyme. Formation of the active enzyme involves a self-maturation process in which the active site pyruvoyl group is generated from an internal serine residue via an autocatalytic post-translational modification. Two non-identical subunits are generated from the proenzyme in this reaction, and the pyruvate is formed at the N-terminus of the alpha chain, which is derived from the carboxyl end of the proenzyme. The post-translation cleavage follows an unusual pathway, termed non-hydrolytic serinolysis, in which the side chain hydroxyl group of the serine supplies its oxygen atom to form the C-terminus of the beta chain, while the remainder of the serine residue undergoes an oxidative deamination to produce ammonia and the pyruvoyl prosthetic group on the alpha chain.

Its subcellular location is the cell membrane. It catalyses the reaction a 1,2-diacyl-sn-glycero-3-phospho-L-serine + H(+) = a 1,2-diacyl-sn-glycero-3-phosphoethanolamine + CO2. The protein operates within phospholipid metabolism; phosphatidylethanolamine biosynthesis; phosphatidylethanolamine from CDP-diacylglycerol: step 2/2. In terms of biological role, catalyzes the formation of phosphatidylethanolamine (PtdEtn) from phosphatidylserine (PtdSer). The protein is Phosphatidylserine decarboxylase proenzyme of Anaplasma phagocytophilum (strain HZ).